The primary structure comprises 208 residues: Ribosomal RNA large subunit methyltransferase E (208 aa).

Positions 63, 65, 83, 99, and 124 each coordinate S-adenosyl-L-methionine. Lysine 164 acts as the Proton acceptor in catalysis.

This sequence belongs to the class I-like SAM-binding methyltransferase superfamily. RNA methyltransferase RlmE family.

It localises to the cytoplasm. It catalyses the reaction uridine(2552) in 23S rRNA + S-adenosyl-L-methionine = 2'-O-methyluridine(2552) in 23S rRNA + S-adenosyl-L-homocysteine + H(+). Its function is as follows. Specifically methylates the uridine in position 2552 of 23S rRNA at the 2'-O position of the ribose in the fully assembled 50S ribosomal subunit. This chain is Ribosomal RNA large subunit methyltransferase E, found in Salmonella paratyphi A (strain ATCC 9150 / SARB42).